Here is a 427-residue protein sequence, read N- to C-terminus: Flotillin-1 (427 aa).

Residues S19, S163, and S385 each carry the phosphoserine modification. At T387 the chain carries Phosphothreonine.

Belongs to the band 7/mec-2 family. Flotillin subfamily. In terms of assembly, heterooligomeric complex of flotillin-1 and flotillin-2 and caveolin-1 and caveolin-2. Interacts with ECPAS.

It localises to the cell membrane. The protein localises to the endosome. It is found in the membrane. Its subcellular location is the caveola. The protein resides in the melanosome. It localises to the membrane raft. Functionally, may act as a scaffolding protein within caveolar membranes, functionally participating in formation of caveolae or caveolae-like vesicles. The chain is Flotillin-1 (FLOT1) from Macaca mulatta (Rhesus macaque).